The following is a 395-amino-acid chain: XK-related protein 8 (395 aa).

Over 1-12 (MPWSSRGALLRD) the chain is Cytoplasmic. A helical transmembrane segment spans residues 13 to 33 (LVLGVLGTAAFLLDLGTDLWA). The Extracellular portion of the chain corresponds to 34–47 (AVQYALGGRYLWAA). The helical transmembrane segment at 48-68 (LVLALLGLASVALQLFSWLWL) threads the bilayer. Residues 69–158 (RADPAGLHGS…VLAIMLQSGR (90 aa)) are Cytoplasmic-facing. The helical transmembrane segment at 159-179 (AEYYQWVGICTSFLGISWALL) threads the bilayer. At 180–200 (DYHRALRTCLPSRPLLGLGSS) the chain is on the extracellular side. A helical transmembrane segment spans residues 201-221 (VIYFLWNLLLLWPRVLAVALF). Residues 222-223 (SA) lie on the Cytoplasmic side of the membrane. A helical transmembrane segment spans residues 224-244 (LFPSYVALHFLGLWLVLLLWV). Topologically, residues 245–258 (WLQGTDFMPDPSSE) are extracellular. A helical transmembrane segment spans residues 259-279 (WLYQVTVATILYFSWFNVAEG). Residues 280–284 (RTRGR) are Cytoplasmic-facing. A helical membrane pass occupies residues 285–305 (AIIHFAFLLSDSILLVATWVT). Residues 306-312 (HSSWLPS) lie on the Extracellular side of the membrane. Residues 313-333 (GIPLQLWLPVGCGCFFLGLAL) traverse the membrane as a helical segment. At 334–395 (RLVYYHWLHP…KDEAALPVKG (62 aa)) the chain is on the cytoplasmic side. At Ser-362 the chain carries Phosphoserine. A Phosphothreonine modification is found at Thr-375.

This sequence belongs to the XK family. In terms of assembly, interacts with BSG and NPTN; which act as chaperones to localize XKR8 at the cell membrane. As to quaternary structure, homodimer. Post-translationally, undergoes proteolytic processing by caspase-3 (CASP3), leading to its activation. Phosphorylation at Thr-375 activates the phospholipid scramblase activity.

It is found in the cell membrane. Its subcellular location is the cytoplasm. The protein localises to the perinuclear region. It carries out the reaction a 1,2-diacyl-sn-glycero-3-phospho-L-serine(in) = a 1,2-diacyl-sn-glycero-3-phospho-L-serine(out). Its activity is regulated as follows. Activated upon caspase cleavage to generate the XK-related protein 8, processed form. Does not act prior the onset of apoptosis. Functionally, phospholipid scramblase that promotes phosphatidylserine exposure on apoptotic cell surface. Phosphatidylserine is a specific marker only present at the surface of apoptotic cells and acts as a specific signal for engulfment. Required for the clearance of apoptotic cells, such as engulfment of apoptotic germ cells by Sertoli cells, clearance of senescent neutrophils or regulation of bipolar cell numbers in the retina. Has no effect on calcium-induced exposure of phosphatidylserine. Promotes myoblast differentiation and survival. The polypeptide is XK-related protein 8 (Pan troglodytes (Chimpanzee)).